The following is an 80-amino-acid chain: Raniseptin-2 (80 aa).

The first 22 residues, 1–22 (MAFLKKSLFLVLFLGIVSLSIC), serve as a signal peptide directing secretion. Residues 23-49 (EEEKRVGEEEEKQEEENEELSEEELRE) constitute a propeptide that is removed on maturation. A disordered region spans residues 27-46 (RVGEEEEKQEEENEELSEEE). Residues 30-44 (EEEEKQEEENEELSE) show a composition bias toward acidic residues.

Belongs to the frog skin active peptide (FSAP) family. Dermaseptin subfamily. As to expression, expressed by the skin glands.

It is found in the secreted. In terms of biological role, has antibacterial activity. This is Raniseptin-2 from Boana raniceps (Chaco tree frog).